The sequence spans 311 residues: Mediator of RNA polymerase II transcription subunit 27 (311 aa).

The protein belongs to the Mediator complex subunit 27 family. Component of the Mediator complex.

The protein localises to the nucleus. Component of the Mediator complex, a coactivator involved in the regulated transcription of nearly all RNA polymerase II-dependent genes. Mediator functions as a bridge to convey information from gene-specific regulatory proteins to the basal RNA polymerase II transcription machinery. Mediator is recruited to promoters by direct interactions with regulatory proteins and serves as a scaffold for the assembly of a functional preinitiation complex with RNA polymerase II and the general transcription factors. The chain is Mediator of RNA polymerase II transcription subunit 27 (med27) from Xenopus tropicalis (Western clawed frog).